A 567-amino-acid chain; its full sequence is Phosphoglucomutase-like protein 5 (567 aa).

Residues 1–26 form a disordered region; it reads MEGSPIPVLTVPTAPYEDQRPTGGGG. Thr-120 bears the Phosphothreonine mark. A Phosphoserine modification is found at Ser-122.

This sequence belongs to the phosphohexose mutase family. Interacts with DMD/dystrophin; the interaction is direct. Interacts with UTRN/utrophin.

The protein resides in the cell junction. The protein localises to the adherens junction. It is found in the cytoplasm. Its subcellular location is the cytoskeleton. It localises to the cell membrane. The protein resides in the sarcolemma. In terms of biological role, component of adherens-type cell-cell and cell-matrix junctions. Has no phosphoglucomutase activity in vitro. This is Phosphoglucomutase-like protein 5 from Rattus norvegicus (Rat).